Here is a 562-residue protein sequence, read N- to C-terminus: Glucocorticoid modulatory element-binding protein 1 (562 aa).

An N-acetylalanine modification is found at A2. Residues 72–156 (ASSIEGNEDM…RKMMDSGQID (85 aa)) form the SAND domain. Zn(2+) is bound at residue C103. 4 residues coordinate DNA: K129, K133, K136, and R147. Zn(2+)-binding residues include H160, C164, and C168. A coiled-coil region spans residues 311-355 (LDNRRKQVEQGEEQFLYTLADLERQLEEQKKQAQDPRLKSQTVQN). Residues 360-384 (PVSTPKPPKRPRLQRPASTTVLSPS) are disordered. Polar residues predominate over residues 375 to 384 (PASTTVLSPS).

As to quaternary structure, homodimer, and heterodimer of GMEB1 and GMEB2. Interacts with TRIM63. Interacts with the glucocorticoid receptor (NR3C1) and NCOA2/TIF2. May interact with HSP27 and CREB-binding protein (CBP). In terms of tissue distribution, ubiquitous. Low levels were detected in heart, brain, spleen, lung, liver, skeletal muscle, kidney and testis.

The protein resides in the nucleus. The protein localises to the cytoplasm. Its function is as follows. Trans-acting factor that binds to glucocorticoid modulatory elements (GME) present in the TAT (tyrosine aminotransferase) promoter and increases sensitivity to low concentrations of glucocorticoids. Also binds to the transferrin receptor promoter. The protein is Glucocorticoid modulatory element-binding protein 1 (Gmeb1) of Mus musculus (Mouse).